Consider the following 104-residue polypeptide: UPF0145 protein VIBHAR_02090 (104 aa).

Belongs to the UPF0145 family.

In Vibrio campbellii (strain ATCC BAA-1116), this protein is UPF0145 protein VIBHAR_02090.